The following is a 456-amino-acid chain: Adenylosuccinate synthetase isozyme 1 (456 aa).

The disordered stretch occupies residues 1–30 (MSSGWSQNDHRSYSNPPPVSGKRPRNDSGN). GTP-binding positions include 41–47 (GDEGKGK) and 69–71 (GHT). The Proton acceptor role is filled by Asp42. Residues Asp42 and Gly69 each coordinate Mg(2+). Asp42 contacts substrate. Residues 42-45 (DEGK) and 67-70 (NAGH) each bind IMP. His70 serves as the catalytic Proton donor. Residue Ser130 is modified to Phosphoserine. Residues Thr162, Arg176, Asn255, Thr270, and Arg334 each contribute to the IMP site. 330 to 336 (VTTGRKR) is a substrate binding site. GTP is bound by residues Arg336, 362 to 364 (KLD), and 444 to 447 (GVGK).

It belongs to the adenylosuccinate synthetase family. Homodimer. Mg(2+) is required as a cofactor.

The protein localises to the cytoplasm. The catalysed reaction is IMP + L-aspartate + GTP = N(6)-(1,2-dicarboxyethyl)-AMP + GDP + phosphate + 2 H(+). It participates in purine metabolism; AMP biosynthesis via de novo pathway; AMP from IMP: step 1/2. Functionally, component of the purine nucleotide cycle (PNC), which interconverts IMP and AMP to regulate the nucleotide levels in various tissues, and which contributes to glycolysis and ammoniagenesis. Catalyzes the first committed step in the biosynthesis of AMP from IMP. The polypeptide is Adenylosuccinate synthetase isozyme 1 (adss1) (Danio rerio (Zebrafish)).